The following is a 190-amino-acid chain: Glutathione peroxidase 2 (190 aa).

Selenocysteine 40 is a catalytic residue. A non-standard amino acid (selenocysteine) is located at residue selenocysteine 40.

It belongs to the glutathione peroxidase family. Homotetramer. In terms of tissue distribution, mostly in liver and gastrointestinal tract, not found in heart or kidney.

The protein localises to the cytoplasm. The protein resides in the cytosol. It carries out the reaction 2 glutathione + H2O2 = glutathione disulfide + 2 H2O. The enzyme catalyses a hydroperoxy polyunsaturated fatty acid + 2 glutathione = a hydroxy polyunsaturated fatty acid + glutathione disulfide + H2O. The catalysed reaction is tert-butyl hydroperoxide + 2 glutathione = tert-butanol + glutathione disulfide + H2O. It catalyses the reaction cumene hydroperoxide + 2 glutathione = 2-phenylpropan-2-ol + glutathione disulfide + H2O. It carries out the reaction (13S)-hydroperoxy-(9Z,11E)-octadecadienoate + 2 glutathione = (13S)-hydroxy-(9Z,11E)-octadecadienoate + glutathione disulfide + H2O. The enzyme catalyses (5S)-hydroperoxy-(6E,8Z,11Z,14Z)-eicosatetraenoate + 2 glutathione = (5S)-hydroxy-(6E,8Z,11Z,14Z)-eicosatetraenoate + glutathione disulfide + H2O. The catalysed reaction is (12R)-hydroperoxy-(5Z,8Z,10E,14Z)-eicosatetraenoate + 2 glutathione = (12R)-hydroxy-(5Z,8Z,10E,14Z)-eicosatetraenoate + glutathione disulfide + H2O. It catalyses the reaction (15S)-hydroperoxy-(5Z,8Z,11Z,13E)-eicosatetraenoate + 2 glutathione = (15S)-hydroxy-(5Z,8Z,11Z,13E)-eicosatetraenoate + glutathione disulfide + H2O. In terms of biological role, catalyzes the reduction of hydroperoxides in a glutathione-dependent manner thus regulating cellular redox homeostasis. Can reduce small soluble hydroperoxides such as H2O2, cumene hydroperoxide and tert-butyl hydroperoxide, as well as several fatty acid-derived hydroperoxides. Cannot reduce phosphatidycholine hydroperoxide. This is Glutathione peroxidase 2 from Homo sapiens (Human).